The chain runs to 491 residues: Aspartyl/glutamyl-tRNA(Asn/Gln) amidotransferase subunit B (491 aa).

Belongs to the GatB/GatE family. GatB subfamily. As to quaternary structure, heterotrimer of A, B and C subunits.

The catalysed reaction is L-glutamyl-tRNA(Gln) + L-glutamine + ATP + H2O = L-glutaminyl-tRNA(Gln) + L-glutamate + ADP + phosphate + H(+). It carries out the reaction L-aspartyl-tRNA(Asn) + L-glutamine + ATP + H2O = L-asparaginyl-tRNA(Asn) + L-glutamate + ADP + phosphate + 2 H(+). Functionally, allows the formation of correctly charged Asn-tRNA(Asn) or Gln-tRNA(Gln) through the transamidation of misacylated Asp-tRNA(Asn) or Glu-tRNA(Gln) in organisms which lack either or both of asparaginyl-tRNA or glutaminyl-tRNA synthetases. The reaction takes place in the presence of glutamine and ATP through an activated phospho-Asp-tRNA(Asn) or phospho-Glu-tRNA(Gln). This chain is Aspartyl/glutamyl-tRNA(Asn/Gln) amidotransferase subunit B, found in Burkholderia cenocepacia (strain HI2424).